We begin with the raw amino-acid sequence, 82 residues long: Putative membrane protein insertion efficiency factor (82 aa).

This sequence belongs to the UPF0161 family.

It is found in the cell inner membrane. Its function is as follows. Could be involved in insertion of integral membrane proteins into the membrane. This Rickettsia peacockii (strain Rustic) protein is Putative membrane protein insertion efficiency factor.